The primary structure comprises 171 residues: Allophycocyanin subunit beta-18 (171 aa).

N4-methylasparagine is present on Asn72. Cys82 contributes to the (2R,3E)-phycocyanobilin binding site.

The protein belongs to the phycobiliprotein family. In terms of assembly, heterodimer of an alpha and a beta chain. Post-translationally, contains one covalently linked bilin chromophore.

The protein resides in the plastid. The protein localises to the chloroplast thylakoid membrane. Its function is as follows. Light-harvesting photosynthetic bile pigment-protein from the phycobiliprotein complex. Allophycocyanin has a maximum absorption at approximately 650 nanometers. In Aglaothamnion neglectum (Red alga), this protein is Allophycocyanin subunit beta-18 (apcF).